A 699-amino-acid polypeptide reads, in one-letter code: Endoplasmic reticulum mannosyl-oligosaccharide 1,2-alpha-mannosidase (699 aa).

The Cytoplasmic portion of the chain corresponds to 1 to 84 (MAACEGRRSG…WKQLSRLQRN (84 aa)). A helical; Signal-anchor for type II membrane protein membrane pass occupies residues 85–105 (MILFLLAFLLFCGLLFYINLA). At 106–699 (DHWKALAFRL…AHPLPIWTPA (594 aa)) the chain is on the lumenal side. The disordered stretch occupies residues 125-243 (IAGLKPANPP…LPPARTQGTP (119 aa)). Over residues 176-201 (DLKDGTQEEATKRQEAPVDPRPEGDP) the composition is skewed to basic and acidic residues. Glu330 functions as the Proton donor in the catalytic mechanism. Residue Asp463 is part of the active site. A disulfide bridge connects residues Cys527 and Cys556. Glu570 (proton donor) is an active-site residue. Glu599 is an active-site residue. Thr688 serves as a coordination point for Ca(2+).

It belongs to the glycosyl hydrolase 47 family. Ca(2+) is required as a cofactor. In terms of tissue distribution, widely expressed.

Its subcellular location is the endoplasmic reticulum membrane. It catalyses the reaction N(4)-(alpha-D-Man-(1-&gt;2)-alpha-D-Man-(1-&gt;2)-alpha-D-Man-(1-&gt;3)-[alpha-D-Man-(1-&gt;2)-alpha-D-Man-(1-&gt;3)-[alpha-D-Man-(1-&gt;2)-alpha-D-Man-(1-&gt;6)]-alpha-D-Man-(1-&gt;6)]-beta-D-Man-(1-&gt;4)-beta-D-GlcNAc-(1-&gt;4)-beta-D-GlcNAc)-L-asparaginyl-[protein] (N-glucan mannose isomer 9A1,2,3B1,2,3) + 4 H2O = N(4)-(alpha-D-Man-(1-&gt;3)-[alpha-D-Man-(1-&gt;3)-[alpha-D-Man-(1-&gt;6)]-alpha-D-Man-(1-&gt;6)]-beta-D-Man-(1-&gt;4)-beta-D-GlcNAc-(1-&gt;4)-beta-D-GlcNAc)-L-asparaginyl-[protein] (N-glucan mannose isomer 5A1,2) + 4 beta-D-mannose. The enzyme catalyses N(4)-(alpha-D-Man-(1-&gt;2)-alpha-D-Man-(1-&gt;2)-alpha-D-Man-(1-&gt;3)-[alpha-D-Man-(1-&gt;3)-[alpha-D-Man-(1-&gt;2)-alpha-D-Man-(1-&gt;6)]-alpha-D-Man-(1-&gt;6)]-beta-D-Man-(1-&gt;4)-beta-D-GlcNAc-(1-&gt;4)-beta-D-GlcNAc)-L-asparaginyl-[protein] (N-glucan mannose isomer 8A1,2,3B1,3) + 3 H2O = N(4)-(alpha-D-Man-(1-&gt;3)-[alpha-D-Man-(1-&gt;3)-[alpha-D-Man-(1-&gt;6)]-alpha-D-Man-(1-&gt;6)]-beta-D-Man-(1-&gt;4)-beta-D-GlcNAc-(1-&gt;4)-beta-D-GlcNAc)-L-asparaginyl-[protein] (N-glucan mannose isomer 5A1,2) + 3 beta-D-mannose. It functions in the pathway protein modification; protein glycosylation. Its activity is regulated as follows. Inhibited by both 1-deoxymannojirimycin (dMNJ) and kifunensine. Functionally, involved in glycoprotein quality control targeting of misfolded glycoproteins for degradation. It primarily trims a single alpha-1,2-linked mannose residue from Man(9)GlcNAc(2) to produce Man(8)GlcNAc(2), but at high enzyme concentrations, as found in the ER quality control compartment (ERQC), it further trims the carbohydrates to Man(5-6)GlcNAc(2). The sequence is that of Endoplasmic reticulum mannosyl-oligosaccharide 1,2-alpha-mannosidase (MAN1B1) from Homo sapiens (Human).